The following is a 437-amino-acid chain: Phosphomethylpyrimidine synthase (437 aa).

Residues N69, M98, Y127, H163, 185–187 (SRG), 226–229 (DACR), and E265 contribute to the substrate site. H269 is a Zn(2+) binding site. Y292 is a substrate binding site. H333 is a Zn(2+) binding site. C409, C412, and C416 together coordinate [4Fe-4S] cluster.

The protein belongs to the ThiC family. Requires [4Fe-4S] cluster as cofactor.

It catalyses the reaction 5-amino-1-(5-phospho-beta-D-ribosyl)imidazole + S-adenosyl-L-methionine = 4-amino-2-methyl-5-(phosphooxymethyl)pyrimidine + CO + 5'-deoxyadenosine + formate + L-methionine + 3 H(+). It participates in cofactor biosynthesis; thiamine diphosphate biosynthesis. Its function is as follows. Catalyzes the synthesis of the hydroxymethylpyrimidine phosphate (HMP-P) moiety of thiamine from aminoimidazole ribotide (AIR) in a radical S-adenosyl-L-methionine (SAM)-dependent reaction. The polypeptide is Phosphomethylpyrimidine synthase (Clostridium botulinum (strain Okra / Type B1)).